Here is a 229-residue protein sequence, read N- to C-terminus: Transmembrane emp24 domain-containing protein 5 (229 aa).

The N-terminal stretch at 1 to 27 (MGGRMWLPFPVLLLSALPAALLRGAAG) is a signal peptide. The Lumenal segment spans residues 28–196 (FTPSLDSDFT…IQESNFDRVN (169 aa)). A GOLD domain is found at 45 to 126 (KECFYQPMPL…EKVIFFELIL (82 aa)). A helical membrane pass occupies residues 197-217 (FWSVVNLMVMVVVSAIQVYTL). At 218-229 (KSLFEDKRKSRT) the chain is on the cytoplasmic side.

Belongs to the EMP24/GP25L family. As to quaternary structure, interacts with TMED9 and TMED10.

It localises to the endoplasmic reticulum membrane. The protein resides in the golgi apparatus. Its subcellular location is the cis-Golgi network membrane. The protein localises to the endoplasmic reticulum-Golgi intermediate compartment membrane. Functionally, potential role in vesicular protein trafficking, mainly in the early secretory pathway. Required for the maintenance of the Golgi apparatus; involved in protein exchange between Golgi stacks during assembly. Probably not required for COPI-vesicle-mediated retrograde transport. The polypeptide is Transmembrane emp24 domain-containing protein 5 (Tmed5) (Mus musculus (Mouse)).